Here is a 99-residue protein sequence, read N- to C-terminus: Integration host factor subunit alpha (99 aa).

Residues 49-75 (FGNFDLRDKNQRPGRNPKTGEDIPITA) are disordered.

It belongs to the bacterial histone-like protein family. Heterodimer of an alpha and a beta chain.

This protein is one of the two subunits of integration host factor, a specific DNA-binding protein that functions in genetic recombination as well as in transcriptional and translational control. The protein is Integration host factor subunit alpha of Klebsiella pneumoniae (strain 342).